The sequence spans 369 residues: Anhydro-N-acetylmuramic acid kinase (369 aa).

12 to 19 (GTSMDGVD) provides a ligand contact to ATP.

The protein belongs to the anhydro-N-acetylmuramic acid kinase family.

The enzyme catalyses 1,6-anhydro-N-acetyl-beta-muramate + ATP + H2O = N-acetyl-D-muramate 6-phosphate + ADP + H(+). It functions in the pathway amino-sugar metabolism; 1,6-anhydro-N-acetylmuramate degradation. The protein operates within cell wall biogenesis; peptidoglycan recycling. Its function is as follows. Catalyzes the specific phosphorylation of 1,6-anhydro-N-acetylmuramic acid (anhMurNAc) with the simultaneous cleavage of the 1,6-anhydro ring, generating MurNAc-6-P. Is required for the utilization of anhMurNAc either imported from the medium or derived from its own cell wall murein, and thus plays a role in cell wall recycling. The protein is Anhydro-N-acetylmuramic acid kinase of Shewanella oneidensis (strain ATCC 700550 / JCM 31522 / CIP 106686 / LMG 19005 / NCIMB 14063 / MR-1).